The primary structure comprises 155 residues: UPF0266 membrane protein LMHCC_1856 (155 aa).

3 consecutive transmembrane segments (helical) span residues 8–28 (IFLF…DAVI), 46–66 (RWDG…NTFF), and 70–90 (PFST…ICFF).

It belongs to the UPF0266 family.

Its subcellular location is the cell membrane. The sequence is that of UPF0266 membrane protein LMHCC_1856 from Listeria monocytogenes serotype 4a (strain HCC23).